Here is a 33-residue protein sequence, read N- to C-terminus: Rugosin-B (33 aa).

Residues C27 and C33 are joined by a disulfide bond.

The protein belongs to the frog skin active peptide (FSAP) family. Brevinin subfamily. In terms of tissue distribution, expressed by the skin glands.

The protein localises to the secreted. Its function is as follows. Shows antibacterial activity against both Gram-negative and Gram-positive bacteria. The polypeptide is Rugosin-B (Glandirana rugosa (Japanese wrinkled frog)).